A 969-amino-acid chain; its full sequence is RNA polymerase-associated protein RapA (969 aa).

A Helicase ATP-binding domain is found at 162 to 339 (EVGQRVAPRV…FARLALLDAD (178 aa)). Residue 175–182 (DEVGLGKT) coordinates ATP. The DEAH box signature appears at 285–288 (DEAH). Positions 492–663 (RIEWLITFLK…GFLKNPQAVG (172 aa)) constitute a Helicase C-terminal domain.

The protein belongs to the SNF2/RAD54 helicase family. RapA subfamily. In terms of assembly, interacts with the RNAP. Has a higher affinity for the core RNAP than for the holoenzyme. Its ATPase activity is stimulated by binding to RNAP.

Transcription regulator that activates transcription by stimulating RNA polymerase (RNAP) recycling in case of stress conditions such as supercoiled DNA or high salt concentrations. Probably acts by releasing the RNAP, when it is trapped or immobilized on tightly supercoiled DNA. Does not activate transcription on linear DNA. Probably not involved in DNA repair. This is RNA polymerase-associated protein RapA from Actinobacillus pleuropneumoniae serotype 5b (strain L20).